The primary structure comprises 533 residues: Invertase (533 aa).

A signal peptide spans 1 to 22; that stretch reads MVQVLSVLVIPLLTLFFGYVAS. Residues 47 to 50 and Gln-68 contribute to the substrate site; that span reads WMND. Asp-50 is an active-site residue. Residue Asn-72 is glycosylated (N-linked (GlcNAc...) asparagine). Substrate is bound at residue 110-111; it reads FS. N-linked (GlcNAc...) asparagine glycans are attached at residues Asn-119, Asn-120, and Asn-126. Residue 178–179 participates in substrate binding; it reads RD. Asn-219 is a glycosylation site (N-linked (GlcNAc...) asparagine). Trp-314 contributes to the substrate binding site. N-linked (GlcNAc...) asparagine glycans are attached at residues Asn-334, Asn-392, and Asn-419.

This sequence belongs to the glycosyl hydrolase 32 family.

The enzyme catalyses Hydrolysis of terminal non-reducing beta-D-fructofuranoside residues in beta-D-fructofuranosides.. The chain is Invertase (INV) from Schwanniomyces occidentalis (Yeast).